The chain runs to 172 residues: Small ribosomal subunit protein uS13c (172 aa).

A chloroplast-targeting transit peptide spans 1–47 (MAHTLATPVAPSVSLICNTKLSVSLSSSSLAFRPVNPKNGGGLSIKC).

As to quaternary structure, component of the chloroplast small ribosomal subunit (SSU). Mature 70S chloroplast ribosomes of higher plants consist of a small (30S) and a large (50S) subunit. The 30S small subunit contains 1 molecule of ribosomal RNA (16S rRNA) and 24 different proteins. The 50S large subunit contains 3 rRNA molecules (23S, 5S and 4.5S rRNA) and 33 different proteins. uS13c interacts with translation factor pY (PSRP1).

It is found in the plastid. Its subcellular location is the chloroplast. In terms of biological role, component of the chloroplast ribosome (chloro-ribosome), a dedicated translation machinery responsible for the synthesis of chloroplast genome-encoded proteins, including proteins of the transcription and translation machinery and components of the photosynthetic apparatus. The sequence is that of Small ribosomal subunit protein uS13c (RPS13) from Spinacia oleracea (Spinach).